The sequence spans 547 residues: uncharacterized protein (547 aa).

Polar residues predominate over residues 1 to 18 (MEYHPSSQSPQVNPGMES). 2 disordered regions span residues 1-41 (MEYH…LQHP) and 80-165 (PSYP…VKRQ). Low complexity-rich tracts occupy residues 19–29 (QQGGYTYTYQQ) and 83–94 (PQSSSAPSNNSY). Residues 121–135 (VPSPSPIEMVPPSPP) are compositionally biased toward pro residues. Positions 136–160 (KTGSNNSAPVTGKTVQSGNALNNSG) are enriched in polar residues. A DNA-binding region (zn(2)-C6 fungal-type) is located at residues 174-201 (CLTCRKRRIKCDERKPICYNCIKSKRQC).

It localises to the nucleus. This is an uncharacterized protein from Schizosaccharomyces pombe (strain 972 / ATCC 24843) (Fission yeast).